The following is a 241-amino-acid chain: WAP four-disulfide core domain protein 8 (241 aa).

The first 38 residues, 1–38 (MWTVRTEGGHFPLHSPTFSWRNVAFLLLLSLALEWTSA), serve as a signal peptide directing secretion. A WAP 1 domain is found at 44 to 91 (IKHKPGLCPKERLTCTTELPDSCNTDFDCKEYQKCCFFACQKKCMDPF). Cystine bridges form between Cys-51–Cys-79, Cys-58–Cys-83, Cys-66–Cys-78, Cys-72–Cys-87, Cys-95–Cys-145, Cys-104–Cys-128, Cys-120–Cys-141, Cys-154–Cys-182, Cys-165–Cys-186, Cys-169–Cys-181, Cys-175–Cys-190, Cys-201–Cys-229, Cys-208–Cys-232, Cys-216–Cys-228, and Cys-222–Cys-236. In terms of domain architecture, BPTI/Kunitz inhibitor spans 95–145 (CMLPVRHGNCNHEAQRWHFDFKNYRCTPFKYRGCEGNANNFLNEDACRTAC). WAP domains lie at 147 to 194 (LIVK…ARAW) and 195 to 240 (TVKK…MDPR).

Expressed ubiquitously, the highest levels are found in the epididymis followed by testis and trachea.

Its subcellular location is the secreted. This chain is WAP four-disulfide core domain protein 8 (WFDC8), found in Homo sapiens (Human).